The sequence spans 175 residues: Calcineurin subunit B (175 aa).

EF-hand domains follow at residues 21–56 (PELM…ANNP), 60–88 (RMIA…FSSK), 90–125 (GRDE…MVGN), and 131–166 (QLQQ…TDIV). Ca(2+) is bound by residues Asp-34, Asp-36, Ser-38, Ser-40, Glu-45, Asp-66, Asp-68, Ser-70, Thr-72, Glu-77, Asp-103, Asp-105, Asp-107, Tyr-109, Glu-114, Asp-144, Asp-146, Asp-148, Lys-150, and Glu-155.

It belongs to the calcineurin regulatory subunit family. In terms of assembly, composed of a catalytic subunit (A) and a regulatory subunit (B).

Regulatory subunit of calcineurin, a calcium-dependent, calmodulin stimulated protein phosphatase. Confers calcium sensitivity. Plays a central role in virulence and antifungal drug action. The protein is Calcineurin subunit B (CNB1) of Cryptococcus neoformans var. neoformans serotype D (strain B-3501A) (Filobasidiella neoformans).